The primary structure comprises 393 residues: Lipid-A-disaccharide synthase (393 aa).

This sequence belongs to the LpxB family.

The enzyme catalyses a lipid X + a UDP-2-N,3-O-bis[(3R)-3-hydroxyacyl]-alpha-D-glucosamine = a lipid A disaccharide + UDP + H(+). The protein operates within bacterial outer membrane biogenesis; LPS lipid A biosynthesis. Condensation of UDP-2,3-diacylglucosamine and 2,3-diacylglucosamine-1-phosphate to form lipid A disaccharide, a precursor of lipid A, a phosphorylated glycolipid that anchors the lipopolysaccharide to the outer membrane of the cell. The sequence is that of Lipid-A-disaccharide synthase from Actinobacillus pleuropneumoniae serotype 3 (strain JL03).